A 645-amino-acid polypeptide reads, in one-letter code: Lipase 1 (645 aa).

A signal peptide spans 1–24; it reads MKRSFIFAPGMLALSISAISNAHA. S34 (nucleophile) is an active-site residue. Catalysis depends on residues D327 and H330. One can recognise an Autotransporter domain in the interval 383–645; it reads NEQGKLGVFG…SFSLGVNASF (263 aa).

Belongs to the 'GDSL' lipolytic enzyme family.

The protein resides in the secreted. The catalysed reaction is a triacylglycerol + H2O = a diacylglycerol + a fatty acid + H(+). This is Lipase 1 (lip-1) from Photorhabdus luminescens (Xenorhabdus luminescens).